A 268-amino-acid polypeptide reads, in one-letter code: Embryonic abundant protein USP92 (268 aa).

The signal sequence occupies residues Met1 to Thr22. A run of 5 repeats spans residues Gly50–Leu55, Gly83–Val88, Gly101–Ile106, Tyr166–Arg183, and Tyr202–His222. Residues Gly50–Ile106 form a 3 X 6 AA approximate repeats region. In terms of domain architecture, BURP spans Leu68–Asn259. The tract at residues Tyr166–His222 is 2 X approximate repeats. N-linked (GlcNAc...) asparagine glycosylation is present at Asn259.

As to expression, seed.

The chain is Embryonic abundant protein USP92 from Vicia faba (Broad bean).